A 314-amino-acid chain; its full sequence is Methionyl-tRNA formyltransferase (314 aa).

Residue 113-116 participates in (6S)-5,6,7,8-tetrahydrofolate binding; that stretch reads SLLP.

It belongs to the Fmt family.

The enzyme catalyses L-methionyl-tRNA(fMet) + (6R)-10-formyltetrahydrofolate = N-formyl-L-methionyl-tRNA(fMet) + (6S)-5,6,7,8-tetrahydrofolate + H(+). Its function is as follows. Attaches a formyl group to the free amino group of methionyl-tRNA(fMet). The formyl group appears to play a dual role in the initiator identity of N-formylmethionyl-tRNA by promoting its recognition by IF2 and preventing the misappropriation of this tRNA by the elongation apparatus. The protein is Methionyl-tRNA formyltransferase of Pseudomonas savastanoi pv. phaseolicola (strain 1448A / Race 6) (Pseudomonas syringae pv. phaseolicola (strain 1448A / Race 6)).